The primary structure comprises 728 residues: Procollagen-lysine,2-oxoglutarate 5-dioxygenase 1 (728 aa).

Positions 1 to 18 (MRSLLLLASLAWLLLAQA) are cleaved as a signal peptide. Residues Asn177, Asn198, and Asn539 are each glycosylated (N-linked (GlcNAc...) asparagine). Positions 637-728 (QFDLAFVVRY…RYIAVSFVDP (92 aa)) constitute a Fe2OG dioxygenase domain. His657 and Asp659 together coordinate Fe cation. Asn687 carries N-linked (GlcNAc...) asparagine glycosylation. His709 contributes to the Fe cation binding site. Arg719 is a catalytic residue.

As to quaternary structure, homodimer. Identified in a complex with P3H3 and P3H4. Fe(2+) serves as cofactor. It depends on L-ascorbate as a cofactor.

It localises to the rough endoplasmic reticulum membrane. It carries out the reaction L-lysyl-[collagen] + 2-oxoglutarate + O2 = (5R)-5-hydroxy-L-lysyl-[collagen] + succinate + CO2. In terms of biological role, part of a complex composed of PLOD1, P3H3 and P3H4 that catalyzes hydroxylation of lysine residues in collagen alpha chains and is required for normal assembly and cross-linkling of collagen fibrils. Forms hydroxylysine residues in -Xaa-Lys-Gly- sequences in collagens. These hydroxylysines serve as sites of attachment for carbohydrate units and are essential for the stability of the intermolecular collagen cross-links. This Rattus norvegicus (Rat) protein is Procollagen-lysine,2-oxoglutarate 5-dioxygenase 1 (Plod1).